Consider the following 1116-residue polypeptide: Surface layer protein (1116 aa).

A signal peptide spans 1-53; that stretch reads MQDSGFKKKDRSTNIPQEQFVYTRGGEHKVMKKVVNSVLASALAITVAPMAFA. 3 consecutive SLH domains span residues 54–117, 118–181, and 182–231; these read AEDT…KLAQ, FNTT…RGVW, and PNSM…YGTD.

It localises to the secreted. It is found in the cell wall. The protein resides in the S-layer. The chain is Surface layer protein from Brevibacillus choshinensis.